Reading from the N-terminus, the 1106-residue chain is Carbamoyl phosphate synthase large chain (1106 aa).

The interval 1-402 (MPKREDLKSV…ALQKALRSLE (402 aa)) is carboxyphosphate synthetic domain. ATP contacts are provided by Arg129, Arg169, Gly175, Gly176, Glu208, Ile210, Glu215, Gly241, Val242, His243, Gln285, and Glu299. An ATP-grasp 1 domain is found at 133 to 328 (KGVVERCGAE…IAKIATKLSL (196 aa)). 3 residues coordinate Mg(2+): Gln285, Glu299, and Asn301. Mn(2+) contacts are provided by Gln285, Glu299, and Asn301. Residues 403–546 (QKGSQLDFGS…YHYSSYDQED (144 aa)) form an oligomerization domain region. The tract at residues 547-956 (EIALHEKPSV…AFAKSQAAAN (410 aa)) is carbamoyl phosphate synthetic domain. One can recognise an ATP-grasp 2 domain in the interval 677-868 (ARVLDIAGLI…LAKAAALIGT (192 aa)). Residues Arg713, Arg752, Leu754, Glu759, Gly784, Ile785, His786, Ser787, Gln827, and Glu839 each coordinate ATP. Residues Gln827, Glu839, and Asn841 each coordinate Mg(2+). Residues Gln827, Glu839, and Asn841 each contribute to the Mn(2+) site. Residues 957 to 1106 (NALPTEGKVF…EALLEAAANV (150 aa)) enclose the MGS-like domain. The segment at 957-1106 (NALPTEGKVF…EALLEAAANV (150 aa)) is allosteric domain.

This sequence belongs to the CarB family. In terms of assembly, composed of two chains; the small (or glutamine) chain promotes the hydrolysis of glutamine to ammonia, which is used by the large (or ammonia) chain to synthesize carbamoyl phosphate. Tetramer of heterodimers (alpha,beta)4. Mg(2+) serves as cofactor. Requires Mn(2+) as cofactor.

It carries out the reaction hydrogencarbonate + L-glutamine + 2 ATP + H2O = carbamoyl phosphate + L-glutamate + 2 ADP + phosphate + 2 H(+). It catalyses the reaction hydrogencarbonate + NH4(+) + 2 ATP = carbamoyl phosphate + 2 ADP + phosphate + 2 H(+). Its pathway is amino-acid biosynthesis; L-arginine biosynthesis; carbamoyl phosphate from bicarbonate: step 1/1. The protein operates within pyrimidine metabolism; UMP biosynthesis via de novo pathway; (S)-dihydroorotate from bicarbonate: step 1/3. Large subunit of the glutamine-dependent carbamoyl phosphate synthetase (CPSase). CPSase catalyzes the formation of carbamoyl phosphate from the ammonia moiety of glutamine, carbonate, and phosphate donated by ATP, constituting the first step of 2 biosynthetic pathways, one leading to arginine and/or urea and the other to pyrimidine nucleotides. The large subunit (synthetase) binds the substrates ammonia (free or transferred from glutamine from the small subunit), hydrogencarbonate and ATP and carries out an ATP-coupled ligase reaction, activating hydrogencarbonate by forming carboxy phosphate which reacts with ammonia to form carbamoyl phosphate. This chain is Carbamoyl phosphate synthase large chain, found in Renibacterium salmoninarum (strain ATCC 33209 / DSM 20767 / JCM 11484 / NBRC 15589 / NCIMB 2235).